The following is a 531-amino-acid chain: Isocitrate lyase (531 aa).

Position 101-103 (101-103 (SGW)) interacts with substrate. Asp-184 is a binding site for Mg(2+). Cys-222 functions as the Proton acceptor in the catalytic mechanism. Residues 223–224 (GH), 380–384 (NNSPS), and Thr-451 contribute to the substrate site.

This sequence belongs to the isocitrate lyase/PEP mutase superfamily. Isocitrate lyase family. Homotetramer. Mg(2+) serves as cofactor.

It catalyses the reaction D-threo-isocitrate = glyoxylate + succinate. It functions in the pathway carbohydrate metabolism; glyoxylate cycle; (S)-malate from isocitrate: step 1/2. In terms of biological role, involved in the metabolic adaptation in response to environmental changes. Catalyzes the reversible formation of succinate and glyoxylate from isocitrate, a key step of the glyoxylate cycle, which operates as an anaplerotic route for replenishing the tricarboxylic acid cycle during growth on fatty acid substrates. This chain is Isocitrate lyase, found in Pseudomonas aeruginosa (strain ATCC 15692 / DSM 22644 / CIP 104116 / JCM 14847 / LMG 12228 / 1C / PRS 101 / PAO1).